We begin with the raw amino-acid sequence, 689 residues long: Armadillo-like helical domain-containing protein 3 (689 aa).

Residues I520–G538 form a helical membrane-spanning segment.

It belongs to the ARMH3 family.

Its subcellular location is the golgi apparatus membrane. The protein resides in the cytoplasm. Functionally, may be involved in Golgi maintenance and protein secretion. The chain is Armadillo-like helical domain-containing protein 3 from Xenopus laevis (African clawed frog).